Reading from the N-terminus, the 123-residue chain is Histone H2B (123 aa).

A disordered region spans residues 1 to 32; the sequence is MPPKAASKGAKKAASKAKAARSTDKKKRRRRR. Residues 9 to 32 are compositionally biased toward basic residues; it reads GAKKAASKAKAARSTDKKKRRRRR. Residue serine 110 is glycosylated (O-linked (GlcNAc) serine). Lysine 118 participates in a covalent cross-link: Glycyl lysine isopeptide (Lys-Gly) (interchain with G-Cter in ubiquitin).

It belongs to the histone H2B family. In terms of assembly, the nucleosome is a histone octamer containing two molecules each of H2A, H2B, H3 and H4 assembled in one H3-H4 heterotetramer and two H2A-H2B heterodimers. The octamer wraps approximately 147 bp of DNA. In terms of processing, monoubiquitination of Lys-118 gives a specific tag for epigenetic transcriptional activation and is also prerequisite for histone H3 'Lys-4' and 'Lys-79' methylation.

Its subcellular location is the nucleus. It localises to the chromosome. Core component of nucleosome. Nucleosomes wrap and compact DNA into chromatin, limiting DNA accessibility to the cellular machineries which require DNA as a template. Histones thereby play a central role in transcription regulation, DNA repair, DNA replication and chromosomal stability. DNA accessibility is regulated via a complex set of post-translational modifications of histones, also called histone code, and nucleosome remodeling. In Urechis caupo (Innkeeper worm), this protein is Histone H2B.